The following is a 322-amino-acid chain: Ferrochelatase (322 aa).

The Fe cation site is built by His193 and Glu274.

This sequence belongs to the ferrochelatase family.

The protein resides in the cytoplasm. It carries out the reaction heme b + 2 H(+) = protoporphyrin IX + Fe(2+). The protein operates within porphyrin-containing compound metabolism; protoheme biosynthesis; protoheme from protoporphyrin-IX: step 1/1. Functionally, catalyzes the ferrous insertion into protoporphyrin IX. The sequence is that of Ferrochelatase from Photobacterium profundum (strain SS9).